Consider the following 254-residue polypeptide: Type III pantothenate kinase (254 aa).

6 to 13 (DVGNSNIV) provides a ligand contact to ATP. Substrate is bound by residues Y100 and 107–110 (GADR). D109 acts as the Proton acceptor in catalysis. D129 contacts K(+). ATP is bound at residue T132. T184 provides a ligand contact to substrate.

The protein belongs to the type III pantothenate kinase family. As to quaternary structure, homodimer. NH4(+) serves as cofactor. The cofactor is K(+).

Its subcellular location is the cytoplasm. The enzyme catalyses (R)-pantothenate + ATP = (R)-4'-phosphopantothenate + ADP + H(+). The protein operates within cofactor biosynthesis; coenzyme A biosynthesis; CoA from (R)-pantothenate: step 1/5. Catalyzes the phosphorylation of pantothenate (Pan), the first step in CoA biosynthesis. In Citrifermentans bemidjiense (strain ATCC BAA-1014 / DSM 16622 / JCM 12645 / Bem) (Geobacter bemidjiensis), this protein is Type III pantothenate kinase.